Consider the following 209-residue polypeptide: Outer-membrane lipoprotein carrier protein (209 aa).

An N-terminal signal peptide occupies residues 1–23 (MKNLLKKSLLGLAFLSLNGFAFA).

The protein belongs to the LolA family. Monomer.

The protein localises to the periplasm. Participates in the translocation of lipoproteins from the inner membrane to the outer membrane. Only forms a complex with a lipoprotein if the residue after the N-terminal Cys is not an aspartate (The Asp acts as a targeting signal to indicate that the lipoprotein should stay in the inner membrane). This Glaesserella parasuis serovar 5 (strain SH0165) (Haemophilus parasuis) protein is Outer-membrane lipoprotein carrier protein.